The following is a 364-amino-acid chain: Alanine racemase (364 aa).

Lys34 functions as the Proton acceptor; specific for D-alanine in the catalytic mechanism. Residue Lys34 is modified to N6-(pyridoxal phosphate)lysine. A substrate-binding site is contributed by Arg129. The Proton acceptor; specific for L-alanine role is filled by Tyr259. Met307 contributes to the substrate binding site.

This sequence belongs to the alanine racemase family. Pyridoxal 5'-phosphate is required as a cofactor.

The catalysed reaction is L-alanine = D-alanine. It participates in amino-acid biosynthesis; D-alanine biosynthesis; D-alanine from L-alanine: step 1/1. Functionally, catalyzes the interconversion of L-alanine and D-alanine. May also act on other amino acids. The protein is Alanine racemase (alr) of Coxiella burnetii (strain RSA 331 / Henzerling II).